Here is a 98-residue protein sequence, read N- to C-terminus: Large ribosomal subunit protein uL23 (98 aa).

Belongs to the universal ribosomal protein uL23 family. In terms of assembly, part of the 50S ribosomal subunit. Contacts protein L29, and trigger factor when it is bound to the ribosome.

One of the early assembly proteins it binds 23S rRNA. One of the proteins that surrounds the polypeptide exit tunnel on the outside of the ribosome. Forms the main docking site for trigger factor binding to the ribosome. This is Large ribosomal subunit protein uL23 from Borreliella afzelii (strain PKo) (Borrelia afzelii).